The sequence spans 194 residues: FMN-dependent NADH:quinone oxidoreductase (194 aa).

FMN is bound by residues Ser10 and 90–93; that span reads MYNL.

This sequence belongs to the azoreductase type 1 family. In terms of assembly, homodimer. FMN is required as a cofactor.

The enzyme catalyses 2 a quinone + NADH + H(+) = 2 a 1,4-benzosemiquinone + NAD(+). The catalysed reaction is N,N-dimethyl-1,4-phenylenediamine + anthranilate + 2 NAD(+) = 2-(4-dimethylaminophenyl)diazenylbenzoate + 2 NADH + 2 H(+). Quinone reductase that provides resistance to thiol-specific stress caused by electrophilic quinones. In terms of biological role, also exhibits azoreductase activity. Catalyzes the reductive cleavage of the azo bond in aromatic azo compounds to the corresponding amines. This Haemophilus influenzae (strain PittEE) protein is FMN-dependent NADH:quinone oxidoreductase.